A 1816-amino-acid polypeptide reads, in one-letter code: Kinesin-like protein KIF1B (1816 aa).

An N-acetylserine modification is found at S2. A Kinesin motor domain is found at 5-354; it reads SVKVAVRVRP…LRYADRAKQI (350 aa). 97–104 contributes to the ATP binding site; sequence GQTGAGKS. Residues 270–350 form an interaction with KIFBP region; that stretch reads NINKSLTTLG…TLSTLRYADR (81 aa). Coiled-coil stretches lie at residues 365–386 and 470–502; these read NAKLVRELKEEVTRLKDLLRAQ and GEEAIERLKESEKIIAELNETWEEKLRKTEAIR. The region spanning 556–612 is the FHA domain; sequence TRVGQADAERRQDIVLSGAHIKEEHCLFRSERSNTGEVIVTLEPCERSETYVNGKRV. Phosphothreonine occurs at positions 647 and 652. 2 coiled-coil regions span residues 668–737 and 841–869; these read EKQG…EEEV and SLDKLKQRLDLMREMYDRAGEVASSAQDD. Phosphoserine is present on residues S1054, S1057, S1416, S1454, and S1487. The interval 1522 to 1571 is disordered; it reads VPKSLSDSLSPSLSSGTLSTSTSISSQISTTTFESAITPSESSGYDSADV. Residues 1525–1553 are compositionally biased toward low complexity; that stretch reads SLSDSLSPSLSSGTLSTSTSISSQISTTT. A compositionally biased stretch (polar residues) spans 1554–1566; the sequence is FESAITPSESSGY. Residues S1573, S1603, S1610, and S1613 each carry the phosphoserine modification. Over residues 1620–1637 the composition is skewed to low complexity; that stretch reads SVSSFSSSTLTPSSTCPS. Residues 1620–1659 form a disordered region; it reads SVSSFSSSTLTPSSTCPSLVDSRSSSMDQKTPEANSRASS. Over residues 1640 to 1659 the composition is skewed to polar residues; sequence DSRSSSMDQKTPEANSRASS. Positions 1702–1799 constitute a PH domain; sequence VSKKGYLHFK…WLYAFNPLLA (98 aa).

Belongs to the TRAFAC class myosin-kinesin ATPase superfamily. Kinesin family. Unc-104 subfamily. As to quaternary structure, monomer. Interacts with KIFBP; positively regulates KIF1B microtubule motor activity. Interacts (via C-terminus end of the kinesin-motor domain) with CHP1; the interaction occurs in a calcium-dependent manner. In terms of assembly, interacts with MADD (via death domain); links this isoform to Rab3-carrying vesicles in anterograde synaptic vesicle transport. As to expression, expressed in the brain (at protein level).

The protein localises to the cytoplasm. Its subcellular location is the cytoskeleton. It is found in the cytoplasmic vesicle. The protein resides in the secretory vesicle. It localises to the synaptic vesicle membrane. The protein localises to the mitochondrion. It catalyses the reaction ATP + H2O + a kinesin associated with a microtubule at position (n) = ADP + phosphate a kinesin associated with a microtubule at position (n+1, toward the plus end).. Its function is as follows. Has a plus-end-directed microtubule motor activity and functions as a motor for transport of vesicles and organelles along microtubules. Has a plus-end-directed microtubule motor activity and functions as a motor for anterograde synaptic vesicle transport along axonal microtubules from the cell body to the presynapse in neuronal cells. Functions as a downstream effector in a developmental apoptotic pathway that is activated when nerve growth factor (NGF) becomes limiting for neuronal progenitor cells. Functionally, has a plus-end-directed microtubule motor activity and functions as a motor for anterograde transport of mitochondria. The sequence is that of Kinesin-like protein KIF1B from Mus musculus (Mouse).